The sequence spans 488 residues: Cobyric acid synthase (488 aa).

The 189-residue stretch at 250–438 folds into the GATase cobBQ-type domain; sequence DITIAIIRLP…LHGIFDNGSW (189 aa). The Nucleophile role is filled by Cys331. His430 is an active-site residue.

This sequence belongs to the CobB/CobQ family. CobQ subfamily.

It functions in the pathway cofactor biosynthesis; adenosylcobalamin biosynthesis. Its function is as follows. Catalyzes amidations at positions B, D, E, and G on adenosylcobyrinic A,C-diamide. NH(2) groups are provided by glutamine, and one molecule of ATP is hydrogenolyzed for each amidation. This is Cobyric acid synthase from Trichodesmium erythraeum (strain IMS101).